Here is a 975-residue protein sequence, read N- to C-terminus: Glycine dehydrogenase (decarboxylating) (975 aa).

Lys-723 carries the post-translational modification N6-(pyridoxal phosphate)lysine.

This sequence belongs to the GcvP family. In terms of assembly, the glycine cleavage system is composed of four proteins: P, T, L and H. Requires pyridoxal 5'-phosphate as cofactor.

The enzyme catalyses N(6)-[(R)-lipoyl]-L-lysyl-[glycine-cleavage complex H protein] + glycine + H(+) = N(6)-[(R)-S(8)-aminomethyldihydrolipoyl]-L-lysyl-[glycine-cleavage complex H protein] + CO2. Functionally, the glycine cleavage system catalyzes the degradation of glycine. The P protein binds the alpha-amino group of glycine through its pyridoxal phosphate cofactor; CO(2) is released and the remaining methylamine moiety is then transferred to the lipoamide cofactor of the H protein. The protein is Glycine dehydrogenase (decarboxylating) of Burkholderia lata (strain ATCC 17760 / DSM 23089 / LMG 22485 / NCIMB 9086 / R18194 / 383).